We begin with the raw amino-acid sequence, 88 residues long: Cell division topological specificity factor (88 aa).

It belongs to the MinE family.

Functionally, prevents the cell division inhibition by proteins MinC and MinD at internal division sites while permitting inhibition at polar sites. This ensures cell division at the proper site by restricting the formation of a division septum at the midpoint of the long axis of the cell. This chain is Cell division topological specificity factor, found in Salmonella agona (strain SL483).